We begin with the raw amino-acid sequence, 435 residues long: MAAPLALVLVVAVTVRAALFRSSLAEFISERVEVVSPLSSWKRVVEGLSLLDLGVSPYSGAVFHETPLIIYLFHFLIDYAELVFMITDALTAIALYFAIQDFNKVVFKKQKLLLELDQYAPDVAELIRTPMEMRYIPLKVALFYLLNPYTILSCVAKSTCAINNTLIAFFILTTIKGSVFLSAIFLALATYQTLYPVTLFAPGLLYLLQRQYIPVKVKSKAFWIFSWEYAMMYIGSLVVIVCLSFFLLSSWDFIPAVYGFILSVPDLTPNIGLFWYFFAEMFEHFSLFFVCVFQINVFFYTVPLAIKLKEHPIFFMFIQIAIISIFKSYPTVGDVALYMAFFPVWNHLYRFLRNVFVLTCIIVVCSLLFPVLWHLWIYAGSANSNFFYAITLTFNVGQILLISDYFYAFLRREYYLTHGLYLTAKDGTEAMLVLK.

Topologically, residues 1–3 (MAA) are cytoplasmic. A helical transmembrane segment spans residues 4–22 (PLALVLVVAVTVRAALFRS). Residues 23-78 (SLAEFISERVEVVSPLSSWKRVVEGLSLLDLGVSPYSGAVFHETPLIIYLFHFLID) are Lumenal-facing. Residues 79-99 (YAELVFMITDALTAIALYFAI) traverse the membrane as a helical segment. Topologically, residues 100–136 (QDFNKVVFKKQKLLLELDQYAPDVAELIRTPMEMRYI) are cytoplasmic. The next 4 membrane-spanning stretches (helical) occupy residues 137–158 (PLKVALFYLLNPYTILSCVAKS), 159–178 (TCAINNTLIAFFILTTIKGS), 179–194 (VFLSAIFLALATYQTL), and 195–205 (YPVTLFAPGLL). The Cytoplasmic segment spans residues 206–222 (YLLQRQYIPVKVKSKAF). Lysine 216 contributes to the a cardiolipin binding site. The helical transmembrane segment at 223–244 (WIFSWEYAMMYIGSLVVIVCLS) threads the bilayer. At 245 to 286 (FFLLSSWDFIPAVYGFILSVPDLTPNIGLFWYFFAEMFEHFS) the chain is on the lumenal side. Residues 287-306 (LFFVCVFQINVFFYTVPLAI) traverse the membrane as a helical segment. At 307–311 (KLKEH) the chain is on the cytoplasmic side. Lysine 309 is an a cardiolipin binding site. The next 2 membrane-spanning stretches (helical) occupy residues 312 to 331 (PIFFMFIQIAIISIFKSYPT) and 332 to 345 (VGDVALYMAFFPVW). At 346–354 (NHLYRFLRN) the chain is on the cytoplasmic side. Residues 355 to 372 (VFVLTCIIVVCSLLFPVL) form a helical membrane-spanning segment. Over 373–384 (WHLWIYAGSANS) the chain is Lumenal. Residues asparagine 383 and asparagine 385 each coordinate a 2-acyl-6-[6-phosphoethanolamine-alpha-D-mannosyl-(1-&gt;2)-6-phosphoethanolamine-alpha-D-mannosyl-(1-&gt;6)-2-phosphoethanolamine-alpha-D-mannosyl-(1-&gt;4)-alpha-D-glucosaminyl]-1-(1-radyl,2-acyl-sn-glycero-3-phospho)-1D-myo-inositol. Residues 385 to 406 (NFFYAITLTFNVGQILLISDYF) traverse the membrane as a helical segment. The Cytoplasmic segment spans residues 407–435 (YAFLRREYYLTHGLYLTAKDGTEAMLVLK).

The protein belongs to the PIGU family. Heteropentamer. Part of the GPI-anchor transamidase complex, consisting of PIGK, PIGT, PIGS, PIGU and GAA1.

It is found in the endoplasmic reticulum membrane. It functions in the pathway glycolipid biosynthesis; glycosylphosphatidylinositol-anchor biosynthesis. Its function is as follows. Component of the glycosylphosphatidylinositol-anchor (GPI-anchor) transamidase (GPI-T) complex that catalyzes the formation of the linkage between a proprotein and a GPI-anchor and participates in GPI anchored protein biosynthesis. Binds the lipid portion of GPI-anchor. May act as an organizer in the transmembrane layer to recruit other subunits, and thus is essential for assembly of the complex. The chain is GPI-anchor transamidase component PIGU from Cricetulus griseus (Chinese hamster).